The sequence spans 248 residues: MQKSEGSGGTQLKNRATGNYDQRTSSSTQLKHRNAVQGSKSSLSTSSPESARKLHPRPSDKLNPKTINPFGEQSRVPSAFAAIYSKGGIPCRLVHGSVKHRLQWECPPESLSFDPLLITLAEGLRETKHPYTFVSKEGFRELLLVKGAPEKAIPLLPRLIPVLKAALVHSDDEVFERGLNALVQLSVVVGPSLNDHLKHLLTSLSKRLMDKKFKEPITSALQKLEQHGGSGSLSIIKSKIPTYCSICC.

N-acetylmethionine is present on Met1. The span at 1 to 29 (MQKSEGSGGTQLKNRATGNYDQRTSSSTQ) shows a compositional bias: polar residues. The interval 1 to 71 (MQKSEGSGGT…LNPKTINPFG (71 aa)) is disordered. The segment covering 39–49 (SKSSLSTSSPE) has biased composition (low complexity). Phosphoserine is present on Ser47.

The polypeptide is PACRG-like protein (PACRGL) (Homo sapiens (Human)).